The chain runs to 188 residues: Protein salivary glands marred (188 aa).

Belongs to the TNFAIP8 family. As to quaternary structure, interacts with the Ste20-like MAP kinase msn.

The protein resides in the cytoplasm. The protein localises to the cytoskeleton. In terms of biological role, important for modulating JNK signaling, cytoskeletal remodeling and autophagy in larval salivary glands. During salivary gland development, involved in the positive regulation of the JNK signaling pathway, acting downstream of the TNF ligand egr and upstream of bsk. The chain is Protein salivary glands marred from Drosophila melanogaster (Fruit fly).